Reading from the N-terminus, the 239-residue chain is uncharacterized protein (239 aa).

Residues arginine 193–serine 214 are disordered.

The protein localises to the nucleus. This is an uncharacterized protein from Schizosaccharomyces pombe (strain 972 / ATCC 24843) (Fission yeast).